A 196-amino-acid chain; its full sequence is ATP-dependent Clp protease proteolytic subunit (196 aa).

Ser-96 functions as the Nucleophile in the catalytic mechanism. The active site involves His-121.

It belongs to the peptidase S14 family. Fourteen ClpP subunits assemble into 2 heptameric rings which stack back to back to give a disk-like structure with a central cavity, resembling the structure of eukaryotic proteasomes.

It is found in the cytoplasm. It carries out the reaction Hydrolysis of proteins to small peptides in the presence of ATP and magnesium. alpha-casein is the usual test substrate. In the absence of ATP, only oligopeptides shorter than five residues are hydrolyzed (such as succinyl-Leu-Tyr-|-NHMec, and Leu-Tyr-Leu-|-Tyr-Trp, in which cleavage of the -Tyr-|-Leu- and -Tyr-|-Trp bonds also occurs).. Its function is as follows. Cleaves peptides in various proteins in a process that requires ATP hydrolysis. Has a chymotrypsin-like activity. Plays a major role in the degradation of misfolded proteins. This Streptococcus agalactiae serotype III (strain NEM316) protein is ATP-dependent Clp protease proteolytic subunit.